A 691-amino-acid chain; its full sequence is Ubiquitin-like domain-containing protein CIP73 (691 aa).

The Ubiquitin-like domain occupies 22 to 97 (IEIKIKMLDS…LHLVARHPDL (76 aa)). Disordered regions lie at residues 92-118 (ARHPDLTPPGSLPNHSATEPNSSTGHG), 176-203 (TGLGRTSDFTGNPSRPQPEQAGFRISSD), 264-283 (RNEERGFVSSRLSSTPEGLS), 432-473 (ASTT…ASIA), 499-554 (SVNT…SSRV), 590-624 (EIHVEDPSSQGTTAGVTSAATSSGAAQAPEAEPNV), and 645-691 (HIGR…QKME). Polar residues-rich tracts occupy residues 104-118 (PNHSATEPNSSTGHG), 178-189 (LGRTSDFTGNPS), 273-283 (SRLSSTPEGLS), 446-465 (TQSASVQRNTGESSVNQTTS), and 499-523 (SVNTNNEQGSQPASQQHTAPHSTAE). A compositionally biased stretch (basic and acidic residues) spans 525-535 (TLHRQSMEDSA). The segment covering 536-554 (RNGTLPTPNTQQEPSSSRV) has biased composition (polar residues). The segment covering 597–617 (SSQGTTAGVTSAATSSGAAQA) has biased composition (low complexity).

As to quaternary structure, interacts with CCAMK. In terms of processing, phosphorylated at the N-terminus by CCAMK. As to expression, highly epressed in roots. Expressed at very low levels in leaves and stems.

The protein localises to the nucleus. Involved in root nodulation. Required for root nodule organogenesis after infection by symbiotic rhizobia. Probably not involved in arbuscular mycorrhizal (AM) symbiosis. Acts downstream of CCAMK. This is Ubiquitin-like domain-containing protein CIP73 from Lotus japonicus (Lotus corniculatus var. japonicus).